A 263-amino-acid chain; its full sequence is Imidazole glycerol phosphate synthase subunit HisF (263 aa).

Active-site residues include Asp11 and Asp130.

It belongs to the HisA/HisF family. Heterodimer of HisH and HisF.

The protein resides in the cytoplasm. It catalyses the reaction 5-[(5-phospho-1-deoxy-D-ribulos-1-ylimino)methylamino]-1-(5-phospho-beta-D-ribosyl)imidazole-4-carboxamide + L-glutamine = D-erythro-1-(imidazol-4-yl)glycerol 3-phosphate + 5-amino-1-(5-phospho-beta-D-ribosyl)imidazole-4-carboxamide + L-glutamate + H(+). It participates in amino-acid biosynthesis; L-histidine biosynthesis; L-histidine from 5-phospho-alpha-D-ribose 1-diphosphate: step 5/9. Functionally, IGPS catalyzes the conversion of PRFAR and glutamine to IGP, AICAR and glutamate. The HisF subunit catalyzes the cyclization activity that produces IGP and AICAR from PRFAR using the ammonia provided by the HisH subunit. This chain is Imidazole glycerol phosphate synthase subunit HisF, found in Herpetosiphon aurantiacus (strain ATCC 23779 / DSM 785 / 114-95).